The chain runs to 144 residues: RxLR effector protein PITG_03192 (144 aa).

An N-terminal signal peptide occupies residues 1-24 (MRVGFVFALLVVSVIVCFNGLTSA). The RxLR-dEER signature appears at 49–58 (RNLRASGEER). A glycan (N-linked (GlcNAc...) asparagine) is linked at Asn-115. Residues 122–142 (FFILATLVMFPIGVWAVVTNY) traverse the membrane as a helical segment.

This sequence belongs to the RxLR effector family. In terms of assembly, interacts with the C-terminal portions the ER-associated potato NAC transcription factors NTP1 and NTP2.

The protein localises to the secreted. It localises to the host endoplasmic reticulum membrane. Functionally, effector that is required for full virulence. Targets host NTP1 and NTP2 transcription factors and prevents their pathogen-associated molecular pattern (PAMP)-triggered re-localization from the endoplasmic reticulum into the nucleus, where they contribute to prevent disease progression by P.infestans. This Phytophthora infestans (strain T30-4) (Potato late blight agent) protein is RxLR effector protein PITG_03192.